Consider the following 179-residue polypeptide: Inosine/xanthosine triphosphatase (179 aa).

Residues Thr8 to Lys13 and Glu68 to Ala69 each bind substrate. Glu68 contacts Mg(2+).

It belongs to the YjjX NTPase family. In terms of assembly, homodimer. Mg(2+) serves as cofactor. It depends on Mn(2+) as a cofactor.

It catalyses the reaction XTP + H2O = XDP + phosphate + H(+). The enzyme catalyses ITP + H2O = IDP + phosphate + H(+). Its function is as follows. Phosphatase that hydrolyzes non-canonical purine nucleotides such as XTP and ITP to their respective diphosphate derivatives. Probably excludes non-canonical purines from DNA/RNA precursor pool, thus preventing their incorporation into DNA/RNA and avoiding chromosomal lesions. The chain is Inosine/xanthosine triphosphatase from Serratia proteamaculans (strain 568).